A 1407-amino-acid chain; its full sequence is DNA-directed RNA polymerase subunit beta' (1407 aa).

Zn(2+) is bound by residues C70, C72, C85, and C88. Mg(2+) contacts are provided by D460, D462, and D464. The Zn(2+) site is built by C814, C888, C895, and C898.

Belongs to the RNA polymerase beta' chain family. In terms of assembly, the RNAP catalytic core consists of 2 alpha, 1 beta, 1 beta' and 1 omega subunit. When a sigma factor is associated with the core the holoenzyme is formed, which can initiate transcription. The cofactor is Mg(2+). Zn(2+) is required as a cofactor.

The catalysed reaction is RNA(n) + a ribonucleoside 5'-triphosphate = RNA(n+1) + diphosphate. In terms of biological role, DNA-dependent RNA polymerase catalyzes the transcription of DNA into RNA using the four ribonucleoside triphosphates as substrates. This chain is DNA-directed RNA polymerase subunit beta', found in Salmonella paratyphi A (strain ATCC 9150 / SARB42).